The sequence spans 49 residues: Large ribosomal subunit protein bL33 (49 aa).

It belongs to the bacterial ribosomal protein bL33 family.

The protein is Large ribosomal subunit protein bL33 of Desulforamulus reducens (strain ATCC BAA-1160 / DSM 100696 / MI-1) (Desulfotomaculum reducens).